We begin with the raw amino-acid sequence, 286 residues long: Merozoite surface protein 2 (286 aa).

Residues 1-20 (MKVIKTLSIINFFIFVTFNI) form the signal peptide. N22 and N36 each carry an N-linked (GlcNAc...) asparagine glycan. The segment at 43–248 (MTESKTPTPT…SQKECTDGNK (206 aa)) is disordered. Residues 44–212 (TESKTPTPTG…EQTESPELQS (169 aa)) are polymorphic region. The segment covering 54–68 (AGAGASGSAGSGDGA) has biased composition (gly residues). Copy 1 of the repeat occupies 59-68 (SGSAGSGDGA). The tract at residues 59 to 106 (SGSAGSGDGASGSASGSASGSASGSAGASGSASGSAGASGSASGSAGA) is 5 X 10 AA tandem repeats of S-G-S-A-[GS]-[GS]-[AD]-G-A. One copy of the 2; partial repeat lies at 69–76 (SGSASGSA). The segment covering 69 to 137 (SGSASGSASG…STSTSSENPN (69 aa)) has biased composition (low complexity). Repeat copies occupy residues 77-86 (SGSASGSAGA), 88-96 (GSASGSAGA), and 97-106 (SGSASGSAGA). 2 stretches are compositionally biased toward polar residues: residues 153–179 (KPNQANKETQNNSNVQQDSQTKSNVPP) and 186–214 (KSPTAQPEQAENSAPTAEQTESPELQSAP). An N-linked (GlcNAc...) asparagine glycan is attached at N163. N235 carries an N-linked (GlcNAc...) asparagine glycan. Residues 239–248 (SQKECTDGNK) are compositionally biased toward basic and acidic residues. A disulfide bond links C243 and C251. N259 and N260 each carry an N-linked (GlcNAc...) asparagine glycan. Residue N260 is the site of GPI-anchor amidated asparagine attachment. The propeptide at 261–286 (SSNIASINKFVVLISATLVLSFAIFI) is removed in mature form.

It localises to the cell membrane. Its function is as follows. May play a role in the merozoite attachment to the erythrocyte. This Plasmodium falciparum (isolate 311) protein is Merozoite surface protein 2.